A 565-amino-acid polypeptide reads, in one-letter code: Proline--tRNA ligase (565 aa).

Belongs to the class-II aminoacyl-tRNA synthetase family. ProS type 1 subfamily. In terms of assembly, homodimer.

Its subcellular location is the cytoplasm. The enzyme catalyses tRNA(Pro) + L-proline + ATP = L-prolyl-tRNA(Pro) + AMP + diphosphate. Its function is as follows. Catalyzes the attachment of proline to tRNA(Pro) in a two-step reaction: proline is first activated by ATP to form Pro-AMP and then transferred to the acceptor end of tRNA(Pro). As ProRS can inadvertently accommodate and process non-cognate amino acids such as alanine and cysteine, to avoid such errors it has two additional distinct editing activities against alanine. One activity is designated as 'pretransfer' editing and involves the tRNA(Pro)-independent hydrolysis of activated Ala-AMP. The other activity is designated 'posttransfer' editing and involves deacylation of mischarged Ala-tRNA(Pro). The misacylated Cys-tRNA(Pro) is not edited by ProRS. The protein is Proline--tRNA ligase of Francisella tularensis subsp. tularensis (strain WY96-3418).